A 237-amino-acid polypeptide reads, in one-letter code: 1-(5-phosphoribosyl)-5-[(5-phosphoribosylamino)methylideneamino] imidazole-4-carboxamide isomerase (237 aa).

Aspartate 8 (proton acceptor) is an active-site residue. The active-site Proton donor is the aspartate 129.

This sequence belongs to the HisA/HisF family.

The protein localises to the cytoplasm. The enzyme catalyses 1-(5-phospho-beta-D-ribosyl)-5-[(5-phospho-beta-D-ribosylamino)methylideneamino]imidazole-4-carboxamide = 5-[(5-phospho-1-deoxy-D-ribulos-1-ylimino)methylamino]-1-(5-phospho-beta-D-ribosyl)imidazole-4-carboxamide. It functions in the pathway amino-acid biosynthesis; L-histidine biosynthesis; L-histidine from 5-phospho-alpha-D-ribose 1-diphosphate: step 4/9. This Methanosphaera stadtmanae (strain ATCC 43021 / DSM 3091 / JCM 11832 / MCB-3) protein is 1-(5-phosphoribosyl)-5-[(5-phosphoribosylamino)methylideneamino] imidazole-4-carboxamide isomerase.